An 801-amino-acid chain; its full sequence is Potassium transporter 1 (801 aa).

The disordered stretch occupies residues 1 to 20; that stretch reads MSSALEVEGSGSPGVEPAAT. Residues 1–57 lie on the Cytoplasmic side of the membrane; sequence MSSALEVEGSGSPGVEPAATATASRLKRHDSLFGDAEKVSGGKHHGGSAVSWAVTLH. A helical membrane pass occupies residues 58-80; sequence LAFQSVGIIYGDIGTSPLYVYSS. Topologically, residues 81-94 are extracellular; sequence TFPDGIGHRDDLVG. The helical transmembrane segment at 95–115 threads the bilayer; that stretch reads VLSLILYTLIIIPMLKYVFIV. The Cytoplasmic portion of the chain corresponds to 116-181; sequence LYANDNGDGG…HKLESSRAAK (66 aa). The helical transmembrane segment at 182–202 threads the bilayer; it reads MALFFLTILGTSMVMGDGTLT. Residues 203 to 219 lie on the Extracellular side of the membrane; the sequence is PAISVLSAVSGIREKAP. Residues 220–240 form a helical membrane-spanning segment; it reads NLTQTQVVLISVAILFMLFSV. Residues 241-247 are Cytoplasmic-facing; it reads QRFGTDK. A helical membrane pass occupies residues 248–268; it reads VGYTFAPIISVWFLLIAGIGL. The Extracellular segment spans residues 269-298; the sequence is YNLVVHEITILKAFNPWYIVQYFRRNGKKG. A helical transmembrane segment spans residues 299-319; the sequence is WVSLGGVVLCVTGTEGMFADL. The Cytoplasmic segment spans residues 320 to 328; sequence GHFNIRAVQ. A helical transmembrane segment spans residues 329–349; the sequence is ISFNCILFPSVALCYIGQAAY. Over 350-375 the chain is Extracellular; that stretch reads LRKFPENVSDTFYKSIPGKYRDRLNF. A helical transmembrane segment spans residues 376–398; the sequence is GPLFWPTFIVAILAAIIASQAML. Residues 399–429 lie on the Cytoplasmic side of the membrane; that stretch reads SGAFAILSKALSLGCLPRVRVIHTSKKYEGQ. A helical membrane pass occupies residues 430–450; it reads VYIPEVNFMMGLASIIVTIAF. Topologically, residues 451 to 461 are extracellular; sequence RTTTSIGNAYG. A helical membrane pass occupies residues 462–482; the sequence is ICVVTTFMVTTHLMTVVMLLI. Over 483–487 the chain is Cytoplasmic; it reads WKKHL. A helical membrane pass occupies residues 488-508; that stretch reads VFILLFYCVFGFTEVVYLSSI. Residues 509–511 lie on the Extracellular side of the membrane; the sequence is LSK. A helical transmembrane segment spans residues 512–532; sequence FVDGGYLPFCFAMVLMTMMAT. The Cytoplasmic portion of the chain corresponds to 533–801; that stretch reads WHYVHVRRYW…LLKVGITYEI (269 aa). The interval 679 to 728 is disordered; sequence DDDDEAAARPRRSTSSAVHSEEAIQAASSGRTTASSVQLQAGGEPPAAMD. Over residues 704–717 the composition is skewed to polar residues; the sequence is AASSGRTTASSVQL.

The protein belongs to the HAK/KUP transporter (TC 2.A.72.3) family. Expressed almost exclusively in roots.

It localises to the cell membrane. High-affinity potassium transporter. Also transports rubidium, with the same affinity and cesium, with a lower affinity. In Oryza sativa subsp. japonica (Rice), this protein is Potassium transporter 1 (HAK1).